Reading from the N-terminus, the 100-residue chain is Small ribosomal subunit protein uS14c (100 aa).

This sequence belongs to the universal ribosomal protein uS14 family. Part of the 30S ribosomal subunit.

It localises to the plastid. It is found in the chloroplast. Functionally, binds 16S rRNA, required for the assembly of 30S particles. This is Small ribosomal subunit protein uS14c from Lobularia maritima (Sweet alyssum).